The sequence spans 302 residues: Protein FdhE homolog (302 aa).

Belongs to the FdhE family.

Its subcellular location is the cytoplasm. Its function is as follows. Necessary for formate dehydrogenase activity. This chain is Protein FdhE homolog, found in Haemophilus influenzae (strain PittEE).